A 316-amino-acid polypeptide reads, in one-letter code: Acetylglutamate kinase (316 aa).

Residues 65-66 (GG), R87, and N179 each bind substrate.

Belongs to the acetylglutamate kinase family. ArgB subfamily.

Its subcellular location is the cytoplasm. It carries out the reaction N-acetyl-L-glutamate + ATP = N-acetyl-L-glutamyl 5-phosphate + ADP. The protein operates within amino-acid biosynthesis; L-arginine biosynthesis; N(2)-acetyl-L-ornithine from L-glutamate: step 2/4. In terms of biological role, catalyzes the ATP-dependent phosphorylation of N-acetyl-L-glutamate. The sequence is that of Acetylglutamate kinase from Alkaliphilus metalliredigens (strain QYMF).